The sequence spans 800 residues: Phenylalanine--tRNA ligase beta subunit (800 aa).

The region spanning 39 to 154 is the tRNA-binding domain; the sequence is TKDIKNLVVG…EAQVPGTDAL (116 aa). One can recognise a B5 domain in the interval 408–483; sequence AFITPIDITA…RIYGYDDIPS (76 aa). Mg(2+) is bound by residues Asp461, Asp467, Glu470, and Glu471. The region spanning 708–800 is the FDX-ACB domain; it reads PRFPGMSRDI…ALIEQGAVIR (93 aa).

It belongs to the phenylalanyl-tRNA synthetase beta subunit family. Type 1 subfamily. In terms of assembly, tetramer of two alpha and two beta subunits. It depends on Mg(2+) as a cofactor.

The protein resides in the cytoplasm. The enzyme catalyses tRNA(Phe) + L-phenylalanine + ATP = L-phenylalanyl-tRNA(Phe) + AMP + diphosphate + H(+). The polypeptide is Phenylalanine--tRNA ligase beta subunit (Staphylococcus aureus (strain COL)).